The following is a 218-amino-acid chain: Small ribosomal subunit protein uS3c (218 aa).

The KH type-2 domain maps to Val47–Ala118.

It belongs to the universal ribosomal protein uS3 family. As to quaternary structure, part of the 30S ribosomal subunit.

Its subcellular location is the plastid. It localises to the chloroplast. This is Small ribosomal subunit protein uS3c (rps3) from Atropa belladonna (Belladonna).